The sequence spans 203 residues: Outer-membrane lipoprotein carrier protein (203 aa).

A signal peptide spans 1–21; it reads MKKLLVACCLLSGFASTSVLA.

It belongs to the LolA family. In terms of assembly, monomer.

The protein resides in the periplasm. Participates in the translocation of lipoproteins from the inner membrane to the outer membrane. Only forms a complex with a lipoprotein if the residue after the N-terminal Cys is not an aspartate (The Asp acts as a targeting signal to indicate that the lipoprotein should stay in the inner membrane). This Serratia proteamaculans (strain 568) protein is Outer-membrane lipoprotein carrier protein.